The primary structure comprises 326 residues: Tetraketide alpha-pyrone reductase 1 (326 aa).

NADP(+)-binding positions include 8-32 (VCVT…GYEV), lysine 44, and tyrosine 162.

Belongs to the NAD(P)-dependent epimerase/dehydratase family. Dihydroflavonol-4-reductase subfamily. As to quaternary structure, interacts with 4CLL1/ACOS5, PKSA and PKSB. As to expression, specifically expressed in anther tapetal cells during microspores development.

It localises to the cytoplasm. Its subcellular location is the nucleus. It is found in the endoplasmic reticulum. In terms of biological role, involved in the biosynthesis of hydroxylated tetraketide compounds that serve as sporopollenin precursors (the main constituents of exine). Is essential for pollen wall development. Acts on tetraketide alpha-pyrones and reduces the carbonyl function on the tetraketide alkyl chain to a secondary alcohol function. This chain is Tetraketide alpha-pyrone reductase 1 (TKPR1), found in Arabidopsis thaliana (Mouse-ear cress).